The sequence spans 241 residues: MKQVDLLYTGKAKSVYRTDDPEVYIMKFRDDITAFDGEKKDTLEGKGRYNAEVSTFIFRYLEEHGIRTHYLASIESGVIAVRNLTMIPLEVIVRNVAAGSIVRNYPFREGEPLDPPLIVIDYKSDAHHDPMLNDELIYALGLATPEELDQIKAMALAINELLSDYLDLRGITLVDFKMEFGRYNGEIVVGDEISMDSMRLWDKETGTSLDKDVYRFGKGDVMETYAGVAKRILSPPWGEPA.

The protein belongs to the SAICAR synthetase family.

It catalyses the reaction 5-amino-1-(5-phospho-D-ribosyl)imidazole-4-carboxylate + L-aspartate + ATP = (2S)-2-[5-amino-1-(5-phospho-beta-D-ribosyl)imidazole-4-carboxamido]succinate + ADP + phosphate + 2 H(+). It functions in the pathway purine metabolism; IMP biosynthesis via de novo pathway; 5-amino-1-(5-phospho-D-ribosyl)imidazole-4-carboxamide from 5-amino-1-(5-phospho-D-ribosyl)imidazole-4-carboxylate: step 1/2. The polypeptide is Phosphoribosylaminoimidazole-succinocarboxamide synthase (Methanoculleus marisnigri (strain ATCC 35101 / DSM 1498 / JR1)).